A 151-amino-acid chain; its full sequence is Small ribosomal subunit protein uS15 (151 aa).

The protein belongs to the universal ribosomal protein uS15 family.

The chain is Small ribosomal subunit protein uS15 (RPS13) from Glycine max (Soybean).